The chain runs to 191 residues: MWPFSRQQNVSRILPIVPTAPRRFPVWFPAVLVLVLIALDQWLKAWALAHLQLNAPAIPVIPGVLDWELTFNTGAAWSMFSGSAVPLALGRILVGLGILSYLLWKPQGRFLTVVLSMIAAGAIGNSIDGLQRGQVTDMIHSPLLSAVTEAINGTRFPIFNIADMCVVGGTILLLVASLLPERKREKAVPEA.

3 helical membrane passes run 26-46, 84-104, and 110-130; these read VWFP…LKAW, AVPL…YLLW, and FLTV…IDGL. Catalysis depends on residues D137 and D163. A helical transmembrane segment spans residues 156 to 176; it reads FPIFNIADMCVVGGTILLLVA.

Belongs to the peptidase A8 family.

It is found in the cell membrane. It catalyses the reaction Release of signal peptides from bacterial membrane prolipoproteins. Hydrolyzes -Xaa-Yaa-Zaa-|-(S,diacylglyceryl)Cys-, in which Xaa is hydrophobic (preferably Leu), and Yaa (Ala or Ser) and Zaa (Gly or Ala) have small, neutral side chains.. It participates in protein modification; lipoprotein biosynthesis (signal peptide cleavage). Functionally, this protein specifically catalyzes the removal of signal peptides from prolipoproteins. The protein is Lipoprotein signal peptidase of Deinococcus radiodurans (strain ATCC 13939 / DSM 20539 / JCM 16871 / CCUG 27074 / LMG 4051 / NBRC 15346 / NCIMB 9279 / VKM B-1422 / R1).